Reading from the N-terminus, the 152-residue chain is Lipoprotein signal peptidase (152 aa).

2 helical membrane-spanning segments follow: residues 55–75 (NKMWFFYIITVVFVVFIVFYM) and 85–105 (LGISLGLILGGAIGNFIDRVF). Residues aspartate 111 and aspartate 129 contribute to the active site. The chain crosses the membrane as a helical span at residues 124–144 (VFNIADSALCIGVVLIIIQTL).

The protein belongs to the peptidase A8 family.

The protein localises to the cell membrane. The catalysed reaction is Release of signal peptides from bacterial membrane prolipoproteins. Hydrolyzes -Xaa-Yaa-Zaa-|-(S,diacylglyceryl)Cys-, in which Xaa is hydrophobic (preferably Leu), and Yaa (Ala or Ser) and Zaa (Gly or Ala) have small, neutral side chains.. The protein operates within protein modification; lipoprotein biosynthesis (signal peptide cleavage). Functionally, this protein specifically catalyzes the removal of signal peptides from prolipoproteins. The sequence is that of Lipoprotein signal peptidase from Bacillus cereus (strain G9842).